The following is a 188-amino-acid chain: Protein GrpE (188 aa).

Residues Met-1–Val-10 show a composition bias toward polar residues. A disordered region spans residues Met-1–Met-35. A compositionally biased stretch (low complexity) spans Ala-19–Ala-32.

The protein belongs to the GrpE family. Homodimer.

It is found in the cytoplasm. Its function is as follows. Participates actively in the response to hyperosmotic and heat shock by preventing the aggregation of stress-denatured proteins, in association with DnaK and GrpE. It is the nucleotide exchange factor for DnaK and may function as a thermosensor. Unfolded proteins bind initially to DnaJ; upon interaction with the DnaJ-bound protein, DnaK hydrolyzes its bound ATP, resulting in the formation of a stable complex. GrpE releases ADP from DnaK; ATP binding to DnaK triggers the release of the substrate protein, thus completing the reaction cycle. Several rounds of ATP-dependent interactions between DnaJ, DnaK and GrpE are required for fully efficient folding. This Azoarcus sp. (strain BH72) protein is Protein GrpE.